Here is a 182-residue protein sequence, read N- to C-terminus: Dual-action ribosomal maturation protein DarP (182 aa).

The segment at 1 to 25 (MEENLADNSEREARPSKTKRKKEMH) is disordered.

This sequence belongs to the DarP family.

The protein resides in the cytoplasm. Member of a network of 50S ribosomal subunit biogenesis factors which assembles along the 30S-50S interface, preventing incorrect 23S rRNA structures from forming. Promotes peptidyl transferase center (PTC) maturation. The sequence is that of Dual-action ribosomal maturation protein DarP from Nitrosospira multiformis (strain ATCC 25196 / NCIMB 11849 / C 71).